We begin with the raw amino-acid sequence, 942 residues long: Apolipoprotein B receptor (942 aa).

Disordered regions lie at residues 66–212, 240–269, 283–487, 501–607, and 671–942; these read GLRS…VTED, ERMV…QAML, DSLG…SPER, AGPE…VPWE, and EGRG…PKPQ. 5 stretches are compositionally biased toward basic and acidic residues: residues 106–123, 132–143, 240–252, 312–330, and 338–352; these read QAER…DARG, PEAEPGTHRDRS, ERMV…ERAR, EADK…EAEV, and EAER…HIAE. Over residues 353–370 the composition is skewed to acidic residues; sequence EEAMGEQETEGSFEDEER. Residue S364 is modified to Phosphoserine. Basic and acidic residues predominate over residues 384 to 397; the sequence is EEVRAEESSREKRN. A compositionally biased stretch (acidic residues) spans 415–425; sequence PDWEDSPEVST. 2 stretches are compositionally biased toward basic and acidic residues: residues 444–458 and 466–475; these read LRVK…ELVR and QLEEGQKGQE. S484 and S520 each carry phosphoserine. Basic and acidic residues-rich tracts occupy residues 514 to 531 and 672 to 687; these read GVDR…EAGK and GRGE…ETTE. Residues 709-721 are compositionally biased toward acidic residues; sequence QEIDGTEEGEQAE. Low complexity predominate over residues 837–853; that stretch reads SRLDVSVPRSRVLLSRS. The segment covering 854–863 has biased composition (basic residues); the sequence is SSRRRSRPSF.

In terms of assembly, homodimer. In terms of processing, there are 2 forms in macrophages, the membrane-binding proteins 200 kDa (MBP 200) and 235 kDa (MBP 235), that can be reduced into a single active ligand-binding species with intermediate mobility (MBP 200R). Highly expressed in spleen, lung and skeletal muscle, and weakly in brain, heart, kidney, and testis.

It is found in the cell membrane. Its function is as follows. Macrophage receptor that binds to the apolipoprotein B48 (APOB) of dietary triglyceride (TG)-rich lipoproteins (TRL) or to a like domain of APOB in hypertriglyceridemic very low density lipoprotein (HTG-VLDL). Binds and internalizes TRL when out of the context of the macrophage. May provide essential lipids to reticuloendothelial cells. Could also be involved in foam cell formation with elevated TRL and remnant lipoprotein (RLP). Mediates the rapid high-affinity uptake of chylomicrons (CM), HTG-VLDL, and trypsinized (tryp) VLDL devoid of APOE in vitro in macrophages. The protein is Apolipoprotein B receptor of Mus musculus (Mouse).